The primary structure comprises 58 residues: Large ribosomal subunit protein uL30 (58 aa).

It belongs to the universal ribosomal protein uL30 family. As to quaternary structure, part of the 50S ribosomal subunit.

This Blochmanniella floridana protein is Large ribosomal subunit protein uL30.